The primary structure comprises 313 residues: Ribosomal RNA small subunit methyltransferase H (313 aa).

S-adenosyl-L-methionine contacts are provided by residues 34 to 36 (GGH), D54, F81, D102, and Q109. Residues 289-313 (IAGPEETDRNPRARSAKLRAAEKLG) are disordered.

The protein belongs to the methyltransferase superfamily. RsmH family.

It localises to the cytoplasm. It carries out the reaction cytidine(1402) in 16S rRNA + S-adenosyl-L-methionine = N(4)-methylcytidine(1402) in 16S rRNA + S-adenosyl-L-homocysteine + H(+). Specifically methylates the N4 position of cytidine in position 1402 (C1402) of 16S rRNA. The chain is Ribosomal RNA small subunit methyltransferase H from Trichlorobacter lovleyi (strain ATCC BAA-1151 / DSM 17278 / SZ) (Geobacter lovleyi).